The primary structure comprises 500 residues: Lysine--tRNA ligase (500 aa).

Mg(2+)-binding residues include Glu410 and Glu417.

This sequence belongs to the class-II aminoacyl-tRNA synthetase family. As to quaternary structure, homodimer. The cofactor is Mg(2+).

The protein resides in the cytoplasm. It carries out the reaction tRNA(Lys) + L-lysine + ATP = L-lysyl-tRNA(Lys) + AMP + diphosphate. This is Lysine--tRNA ligase from Shewanella baltica (strain OS155 / ATCC BAA-1091).